Here is a 372-residue protein sequence, read N- to C-terminus: Oxoglutarate-dependent flavonoid 7-O-demethylase 1 (372 aa).

Residues 221–321 form the Fe2OG dioxygenase domain; it reads GIQALRMNYY…RLSVAAFLNP (101 aa). Fe cation-binding residues include histidine 245, aspartate 247, and histidine 302. Residue arginine 312 coordinates 2-oxoglutarate.

This sequence belongs to the iron/ascorbate-dependent oxidoreductase family. Monomer. Fe(2+) is required as a cofactor. It depends on L-ascorbate as a cofactor. In terms of tissue distribution, accumulates in the trichomes of nevadensin-accumulating strains (e.g. cv. SD and cv. EMX-1) and in cv. SW (at protein level) but not in cv. MC.

It localises to the cytoplasm. The catalysed reaction is gardenin B + 2-oxoglutarate + O2 = nevadensin + formaldehyde + succinate + CO2 + H(+). The enzyme catalyses 8-hydroxysalvigenin + 2-oxoglutarate + O2 = pilosin + formaldehyde + succinate + CO2. It participates in flavonoid metabolism. With respect to regulation, inhibited by prohexadione-calcium, a 2-oxoglutarate-dependent dioxygenase (2-ODD) inhibitor, thus leading to a decreased abundance of nevadensin (NEV) and absence of pilosin (PIL) production, but to the accumulation of gardenin B (GARD B) and 8-hydroxysalvigenin (8-OH-SALV). In terms of biological role, oxoglutarate-dependent dioxygenase (2-ODD) acting as a flavonoid 7-O-demethylase involved in the biosynthesis of polymethoxylated flavonoids natural products such as nevadensin and salvigenin, aroma compounds which contribute to the flavor of sweet basil, and exhibit pharmacological activities such as anti-allergic, anti-oxidant, antibacterial, anti-proliferative, and anti-inflammatory effects. Catalyzes the 7-O-demethylation of methoxylated flavones; mediates the conversion of 8-hydroxysalvigenin (8-OH-SALV) to pilosin (PIL) and of gardenin B (GARD B) to nevadensin (NEV). This chain is Oxoglutarate-dependent flavonoid 7-O-demethylase 1, found in Ocimum basilicum (Sweet basil).